Reading from the N-terminus, the 258-residue chain is Phosphonates import ATP-binding protein PhnC 1 (258 aa).

The 245-residue stretch at 2–246 (IEFKDVGLVY…TFEEIYGRSI (245 aa)) folds into the ABC transporter domain. 35–42 (GLSGAGKS) lines the ATP pocket.

Belongs to the ABC transporter superfamily. Phosphonates importer (TC 3.A.1.9.1) family. In terms of assembly, the complex is composed of two ATP-binding proteins (PhnC), two transmembrane proteins (PhnE) and a solute-binding protein (PhnD).

The protein resides in the cell membrane. It carries out the reaction phosphonate(out) + ATP + H2O = phosphonate(in) + ADP + phosphate + H(+). Part of the ABC transporter complex PhnCDE involved in phosphonates import. Responsible for energy coupling to the transport system. In Oceanobacillus iheyensis (strain DSM 14371 / CIP 107618 / JCM 11309 / KCTC 3954 / HTE831), this protein is Phosphonates import ATP-binding protein PhnC 1.